The sequence spans 451 residues: Tapasin-related protein (451 aa).

A signal peptide spans 1 to 20; sequence MGLEPSWYLLLCLAVSGAAG. Residues 21–412 are Lumenal-facing; sequence TDPPTAPTTA…RVLPNPEQRG (392 aa). The region spanning 196–301 is the Ig-like V-type domain; the sequence is FQVTSETQTL…TSLYQAQQIM (106 aa). 2 disulfides stabilise this stretch: C217/C288 and C326/C387. N-linked (GlcNAc...) asparagine glycosylation is found at N270 and N277. An Ig-like C1-type domain is found at 302-399; it reads PLNILAPPKI…AHVSLEEPLT (98 aa). The helical transmembrane segment at 413 to 433 threads the bilayer; that stretch reads TLGVIFASIIFLSALLLFLGL. Over 434-451 the chain is Cytoplasmic; that stretch reads HRQQASSSRSTRPMRHSG.

In terms of assembly, interacts with peptide-free HLA-A*02-B2M complexes or those loaded with low affinity peptides, likely facilitating peptide exchange onto higher affinity peptides. Interacts with MR1 in a ligand-independent way; this interaction may stabilize MR1 pool and facilitate ligand loading and dissociation. As to expression, widely expressed.

It is found in the cell membrane. Its subcellular location is the endoplasmic reticulum membrane. It localises to the microsome membrane. The protein resides in the golgi apparatus membrane. Its function is as follows. Component of the antigen processing and presentation pathway, which binds to MHC class I coupled with beta2-microglobulin/B2M. Association between TAPBPR and MHC class I occurs in the absence of a functional peptide-loading complex (PLC). Expression seems to slow down and down-regulate MHC class I surface expression. This is Tapasin-related protein (Tapbpl) from Mus musculus (Mouse).